The primary structure comprises 209 residues: Imidazole glycerol phosphate synthase subunit HisH (209 aa).

Residues 3–209 form the Glutamine amidotransferase type-1 domain; sequence KIAIIDYGMG…SILKNFGEMK (207 aa). Cys81 functions as the Nucleophile in the catalytic mechanism. Residues His190 and Glu192 contribute to the active site.

In terms of assembly, heterodimer of HisH and HisF.

The protein localises to the cytoplasm. The catalysed reaction is 5-[(5-phospho-1-deoxy-D-ribulos-1-ylimino)methylamino]-1-(5-phospho-beta-D-ribosyl)imidazole-4-carboxamide + L-glutamine = D-erythro-1-(imidazol-4-yl)glycerol 3-phosphate + 5-amino-1-(5-phospho-beta-D-ribosyl)imidazole-4-carboxamide + L-glutamate + H(+). The enzyme catalyses L-glutamine + H2O = L-glutamate + NH4(+). Its pathway is amino-acid biosynthesis; L-histidine biosynthesis; L-histidine from 5-phospho-alpha-D-ribose 1-diphosphate: step 5/9. Functionally, IGPS catalyzes the conversion of PRFAR and glutamine to IGP, AICAR and glutamate. The HisH subunit catalyzes the hydrolysis of glutamine to glutamate and ammonia as part of the synthesis of IGP and AICAR. The resulting ammonia molecule is channeled to the active site of HisF. The chain is Imidazole glycerol phosphate synthase subunit HisH from Geobacter sulfurreducens (strain ATCC 51573 / DSM 12127 / PCA).